A 291-amino-acid chain; its full sequence is Putative ribosomal protein uL16-like, mitochondrial (291 aa).

A mitochondrion-targeting transit peptide spans 1–27 (MQRFMFSRVVEHQRQISRGFLSLVPSL). A compositionally biased stretch (basic and acidic residues) spans 127 to 137 (VHETSNNEKKQ). Residues 127 to 173 (VHETSNNEKKQQKQKSSVNEKKPKKKKKSSISDIPRRTKFQKHHRGR) form a disordered region. The span at 163 to 173 (RTKFQKHHRGR) shows a compositional bias: basic residues.

This sequence belongs to the universal ribosomal protein uL16 family.

The protein resides in the mitochondrion. In terms of biological role, could be a component of the large subunit of mitochondrial ribosome. The sequence is that of Putative ribosomal protein uL16-like, mitochondrial from Arabidopsis thaliana (Mouse-ear cress).